A 1503-amino-acid chain; its full sequence is MMNTNELFDQTAVNSSQDKPLNPPFAVAQPANIARGKFRSLTLINWNGFFARTFDFDELVTTLSGGNGAGKSTTMAGFVTALIPDLTLLNFRNTTEAGSTSSSRDKGLYGKLKAGVCYAVLETVNSRAQRIITGVRLQQIAGRDKKVDIRPFSLQNVPMADSVISLFTEQVANKARVLSLNDLKEKFEETAVTFKPYHSITDYHSFMFDLGILPKRLRSSSDRNKFYKLIEASLYGGISSVITKSLRDYLLPENSGVRQAFQDMEAALRENRMTLEAIKVTQSDRDMFKHLITEATQYVSADYMRNANERRGNVVSALAQRRTWYDTKAKLLVEEQRLIEFSREVADINLTEQSLESEYNVANDHLNLVMNALRHQEKIIRYQDEVDALNEKLEQQQIALEEVSEQVEDAQAHTDEIDDRVDGLRSQIADYQQALDAQQTRALQYQQAITALQKAQQLCALPHLDLDNLKDYQTEFEAQAQDITDHVFELEQRLSISDMTKTQFEKAYQLVCKVSGEIDRSQAWSEATQLLATFPDQKMQAAQAVALRQKLADLEQRLHQQQKVQRLIAEFNQQAAKKLTDFTALENHFEQQQIKLEDLEAELANVIELRSVHRQQQEQLTQQYNQLAKTAPAWHTARSVLTRLEEQCAEQFENSQAIMHCMQEMLRKEREATLERDELARTEAALASQISQLSQADGAEDIRLNQLAERLGGVLLSELYDDVSLQDAPYFSALYGEARHAIVVRDLTSVKAQLEKLTDCPNDLYLIEGDPTAFDDTVFSAEELYDSVIVKVSNRQWRYSKFPEVPLFGRAAREKHLITLKTERDDIAEQHAESAFNVQKYQRLHQHLSQFVGTHLNIAFQPDPEMLMQEIALERQEIEGQLNQAVENEHYLRQQADHLKAELQMLNKILPLANTLADETVMERFEECREQLQSAEENELFVRQFGQYLTQLAPIATSLQTDPSKFEQLEHDYQQAKSTQRILQQKVFALSDVMQRRLHFNYSEENQCEGSALTEQLRTDLALAQQEREQARQRLRQAQAQFTQYNQVLISLRSAYDAKYQMLQELMQEIDDLGVRGDSAAEECARLRRDELQQQLSQQRARKGYLDKQLGIIEAEIDNLNRLLRKTERDYQTQRELVVQAKASWCLVQKLSRNSDVEKRLNRRELAYQSAEELRSISDKALGALRTAVADNEYLRDSLRASEDSRKPENKVAFFIAVYQHLRERIRQDIIRTDDPIDAIEQMEIELSRLINELTSREKKLAISAESVANILRKTIQREQNRILQLNQGLQNIAFGQVKGVRLVVNIRDTHSILLNALSDQHEQHKDLFESQKLSFSEALAMLYKRVNPHIELGQRMPQTIGEELLDYRNYLDLEVETLRGADGWMRAESSALSTGEAIGTGMSILLMVVQSWEEESRRMRAKDILPCRLLFLDEAARLDAMSINTLFELCERLDMQLLIAAPENISPEHGTTYKLVRKILANQEYVHVVGLKGFGQQMNKST.

Residues 1–19 (MMNTNELFDQTAVNSSQDK) are compositionally biased toward polar residues. Residues 1-21 (MMNTNELFDQTAVNSSQDKPL) are disordered. 65–72 (GGNGAGKS) contributes to the ATP binding site. Coiled-coil stretches lie at residues 370–495 (MNAL…QRLS), 536–616 (DQKM…HRQQ), 662–697 (MQEM…SQAD), 865–1173 (EMLM…SAEE), and 1238–1293 (DAIE…LQNI). Residues 696-813 (ADGAEDIRLN…EVPLFGRAAR (118 aa)) are flexible hinge.

Belongs to the SMC family. MukB subfamily. In terms of assembly, homodimerization via its hinge domain. Binds to DNA via its C-terminal region. Interacts, and probably forms a ternary complex, with MukE and MukF via its C-terminal region. The complex formation is stimulated by calcium or magnesium. Interacts with tubulin-related protein FtsZ.

The protein resides in the cytoplasm. It localises to the nucleoid. Plays a central role in chromosome condensation, segregation and cell cycle progression. Functions as a homodimer, which is essential for chromosome partition. Involved in negative DNA supercoiling in vivo, and by this means organize and compact chromosomes. May achieve or facilitate chromosome segregation by condensation DNA from both sides of a centrally located replisome during cell division. The sequence is that of Chromosome partition protein MukB from Haemophilus ducreyi (strain 35000HP / ATCC 700724).